A 350-amino-acid chain; its full sequence is MSKKPIVLKLGKDAFGDQAWGELEKIADVITIPESTTREQFLREVKDPQNKLSQVQVITRTARSVKNTGRFDEELALALPSSVVAVCHTGAGYDQIDVEPFKKRHIQVANVPDLVSNATADTHVFLLLGALRNFGIGNRRLIEGNWPEAGPACGSPFGYDPEGKTVGILGLGRIGRCILERLKPFGFENFIYHNRHQLPSEEEHGCEYVGFEEFLKRSDIVSVNVPLNHNTHHLINAETIEKMKDGVVIVNTARGAVIDEQAMTDALRSGKIRSAGLDVFEYEPKISKELLSMSQVLGLPHMGTHSVETRKKMEELVVENAKNVILTGKVLTIVPELQNEDWPNESKPLV.

Thr31 carries the phosphothreonine modification. NAD(+)-binding positions include 173–174 (RI), 252–254 (TAR), and Asp278. Arg254 is a catalytic residue. Glu283 is a catalytic residue. His301 functions as the Proton donor in the catalytic mechanism. 301–304 (HMGT) serves as a coordination point for NAD(+).

It belongs to the D-isomer specific 2-hydroxyacid dehydrogenase family.

The protein localises to the cytoplasm. The protein resides in the nucleus. It is found in the mitochondrion. It catalyses the reaction glycolate + NAD(+) = glyoxylate + NADH + H(+). It carries out the reaction glycolate + NADP(+) = glyoxylate + NADPH + H(+). The enzyme catalyses (R)-glycerate + NAD(+) = 3-hydroxypyruvate + NADH + H(+). The catalysed reaction is (R)-glycerate + NADP(+) = 3-hydroxypyruvate + NADPH + H(+). Functionally, glyoxylate reductase that reversibly reduces glyoxylate to glycolate, or alternatively hydroxypyruvate to D-glycerate, using either NADPH or NADH as a cosubstrate. Does not act as a hydroxyisocaproate dehydrogenase even though it also has minor activity on alpha-ketoisocaproate. This Saccharomyces cerevisiae (strain ATCC 204508 / S288c) (Baker's yeast) protein is Glyoxylate reductase 1.